The chain runs to 692 residues: Proprotein convertase subtilisin/kexin type 9 (692 aa).

A signal peptide spans 1–30 (MGTVSSRRSWWPLPLPLLLLLLLGPAGARA). A propeptide spanning residues 31 to 152 (QEDEDGDYEE…IEEDSSVFAQ (122 aa)) is cleaved from the precursor. Tyr-38 carries the post-translational modification Sulfotyrosine. The residue at position 47 (Ser-47) is a Phosphoserine. The region spanning 77-149 (TYVVVLKEET…VDYIEEDSSV (73 aa)) is the Inhibitor I9 domain. The Peptidase S8 domain maps to 155–444 (PWNLERITPA…VLTPNLVAAL (290 aa)). Residues Asp-186 and His-226 each act as charge relay system in the active site. Disulfide bonds link Cys-223/Cys-255 and Cys-323/Cys-358. Ser-386 functions as the Charge relay system in the catalytic mechanism. A C-terminal domain region spans residues 450–692 (RAGWQLFCRT…HLVQASQELQ (243 aa)). Intrachain disulfides connect Cys-457/Cys-527, Cys-477/Cys-526, and Cys-486/Cys-509. N-linked (GlcNAc...) asparagine glycosylation occurs at Asn-533. 6 disulfides stabilise this stretch: Cys-534–Cys-601, Cys-552–Cys-600, Cys-562–Cys-588, Cys-608–Cys-679, Cys-626–Cys-678, and Cys-635–Cys-654. Ser-688 is modified (phosphoserine).

The protein belongs to the peptidase S8 family. As to quaternary structure, monomer. Can self-associate to form dimers and higher multimers which may have increased LDLR degrading activity. The precursor protein but not the mature protein may form multimers. Interacts with APOB, VLDLR, LRP8/APOER2 and BACE1. The full-length immature form (pro-PCSK9) interacts with SCNN1A, SCNN1B and SCNN1G. The pro-PCSK9 form (via C-terminal domain) interacts with LDLR. Interacts (via the C-terminal domain) with ANXA2 (via repeat Annexin 1); the interaction inhibits the degradation of LDLR. Ca(2+) is required as a cofactor. Post-translationally, cleavage by furin and PCSK5 generates a truncated inactive protein that is unable to induce LDLR degradation. Undergoes autocatalytic cleavage in the endoplasmic reticulum to release the propeptide from the N-terminus and the cleavage of the propeptide is strictly required for its maturation and activation. The cleaved propeptide however remains associated with the catalytic domain through non-covalent interactions, preventing potential substrates from accessing its active site. As a result, it is secreted from cells as a propeptide-containing, enzymatically inactive protein. In terms of processing, phosphorylation protects the propeptide against proteolysis.

It is found in the cytoplasm. It localises to the secreted. Its subcellular location is the endosome. The protein localises to the lysosome. The protein resides in the cell surface. It is found in the endoplasmic reticulum. It localises to the golgi apparatus. Its proteolytic activity is autoinhibited by the non-covalent binding of the propeptide to the catalytic domain. Inhibited by EGTA. Functionally, crucial player in the regulation of plasma cholesterol homeostasis. Binds to low-density lipid receptor family members: low density lipoprotein receptor (LDLR), very low density lipoprotein receptor (VLDLR), apolipoprotein E receptor (LRP1/APOER) and apolipoprotein receptor 2 (LRP8/APOER2), and promotes their degradation in intracellular acidic compartments. Acts via a non-proteolytic mechanism to enhance the degradation of the hepatic LDLR through a clathrin LDLRAP1/ARH-mediated pathway. May prevent the recycling of LDLR from endosomes to the cell surface or direct it to lysosomes for degradation. Can induce ubiquitination of LDLR leading to its subsequent degradation. Inhibits intracellular degradation of APOB via the autophagosome/lysosome pathway in a LDLR-independent manner. Involved in the disposal of non-acetylated intermediates of BACE1 in the early secretory pathway. Inhibits epithelial Na(+) channel (ENaC)-mediated Na(+) absorption by reducing ENaC surface expression primarily by increasing its proteasomal degradation. Regulates neuronal apoptosis via modulation of LRP8/APOER2 levels and related anti-apoptotic signaling pathways. The sequence is that of Proprotein convertase subtilisin/kexin type 9 (PCSK9) from Macaca nemestrina (Pig-tailed macaque).